Here is a 464-residue protein sequence, read N- to C-terminus: Cerebellar degeneration-related protein 2-like (464 aa).

Coiled coils occupy residues 31–154 (AAEL…RRKT), 201–264 (VSSL…KSRV), and 342–379 (MSIL…AEVQ). Positions 371 to 419 (ESLRHAEVQTSRPVSRDPSMKECRVAEPQQPPPTPPQTPSTPEALEGIS) are disordered. Residues 384-395 (VSRDPSMKECRV) show a composition bias toward basic and acidic residues. Over residues 399–409 (QQPPPTPPQTP) the composition is skewed to pro residues.

The protein belongs to the CDR2 family.

This is Cerebellar degeneration-related protein 2-like (cdr2l) from Danio rerio (Zebrafish).